Reading from the N-terminus, the 63-residue chain is Conotoxin LeDr243 (63 aa).

A signal peptide spans 1–22; sequence MRCLPVFVILLLLIASTPSIDA. The propeptide occupies 23 to 47; that stretch reads RPKTKDDMPLASFNDNAKRILQILS. Cys-60 carries the post-translational modification Cysteine amide. A propeptide spanning residues 62–63 is cleaved from the precursor; it reads LG.

It belongs to the conotoxin T superfamily. Contains 2 disulfide bonds that can be either 'C1-C3, C2-C4' or 'C1-C4, C2-C3', since these disulfide connectivities have been observed for conotoxins with cysteine framework V (for examples, see AC P0DQQ7 and AC P81755). As to expression, expressed by the venom duct.

It localises to the secreted. In Conus litteratus (Lettered cone), this protein is Conotoxin LeDr243.